The following is a 344-amino-acid chain: N-acetyl-gamma-glutamyl-phosphate reductase (344 aa).

Cys-150 is an active-site residue.

It belongs to the NAGSA dehydrogenase family. Type 1 subfamily.

It localises to the cytoplasm. It catalyses the reaction N-acetyl-L-glutamate 5-semialdehyde + phosphate + NADP(+) = N-acetyl-L-glutamyl 5-phosphate + NADPH + H(+). Its pathway is amino-acid biosynthesis; L-arginine biosynthesis; N(2)-acetyl-L-ornithine from L-glutamate: step 3/4. Functionally, catalyzes the NADPH-dependent reduction of N-acetyl-5-glutamyl phosphate to yield N-acetyl-L-glutamate 5-semialdehyde. This is N-acetyl-gamma-glutamyl-phosphate reductase from Pseudomonas paraeruginosa (strain DSM 24068 / PA7) (Pseudomonas aeruginosa (strain PA7)).